A 785-amino-acid chain; its full sequence is SUN domain-containing protein 1 (785 aa).

The interval 1–138 (MDFSRLHMYS…TRRPPVLDES (138 aa)) is LMNA-binding. Residues 1-288 (MDFSRLHMYS…VFLLTRCLRN (288 aa)) lie on the Nuclear side of the membrane. Phosphoserine is present on residues S48, S100, and S138. K195 is covalently cross-linked (Glycyl lysine isopeptide (Lys-Gly) (interchain with G-Cter in SUMO2)). An SYNE2-binding region spans residues 209–309 (SRVYSRDRNQ…FLLLAGLSLR (101 aa)). Residues 223–309 (LLQILRRIGA…FLLLAGLSLR (87 aa)) form an EMD-binding region. A helical transmembrane segment spans residues 289–308 (ICKFLVLLIPLFLLLAGLSL). Over 309–785 (RGQGNFFSFL…RFRVHGEPVK (477 aa)) the chain is Perinuclear space. A phosphoserine mark is found at D333 and S344. Positions 428–495 (HQEHEVRMSH…KSELSSWRHV (68 aa)) form a coiled coil. Positions 574–785 (TSEAVVSAVS…RFRVHGEPVK (212 aa)) are sufficient for interaction with SYNE1 and SYNE2. Residues 622-784 (GGSILSTRCS…YRFRVHGEPV (163 aa)) enclose the SUN domain.

Core component of the LINC complex which is composed of inner nuclear membrane SUN domain-containing proteins coupled to outer nuclear membrane KASH domain-containing nesprins. SUN and KASH domain-containing proteins seem to bind each other promiscuously; however, differentially expression of LINC complex constituents is giving rise to specific assemblies. At least SUN1/2-containing core LINC complexes are proposed to be hexameric composed of three protomers of each KASH and SUN domain-containing protein. Interacts with KASH5 (via the last 22 amino acids); this interaction mediates KASH5 telomere localization by forming a SUN1:KASH5 LINC complex. May interact with SYNE3. Interacts with SYNE2 and SYNE1; probably forming respective LINC complexes. Interacts with A-type lamin with a strong preference for unprocessed A-type lamin compared with the mature protein. Interaction with lamins B1 and C is hardly detectable. Interacts with NAT10. Interacts with EMD and TSNAX. Associates with the nuclear pore complex (NPC). Interacts with CCDC79/TERB1; promoting the accumulation of the LINC complex complexes at the telomere-nuclear envelope attachment sites. Interacts (via KASH domain) with TMEM258. In terms of processing, the disulfide bond with KASH domain-containing nesprins is required for stability of the respective LINC complexes under tensile forces.

It localises to the nucleus inner membrane. As a component of the LINC (LInker of Nucleoskeleton and Cytoskeleton) complex involved in the connection between the nuclear lamina and the cytoskeleton. The nucleocytoplasmic interactions established by the LINC complex play an important role in the transmission of mechanical forces across the nuclear envelope and in nuclear movement and positioning. Required for interkinetic nuclear migration (INM) and essential for nucleokinesis and centrosome-nucleus coupling during radial neuronal migration in the cerebral cortex and during glial migration. Involved in telomere attachment to nuclear envelope in the prophase of meiosis implicating a SUN1/2:KASH5 LINC complex in which SUN1 and SUN2 seem to act at least partial redundantly. Required for gametogenesis and involved in selective gene expression of coding and non-coding RNAs needed for gametogenesis. Helps to define the distribution of nuclear pore complexes (NPCs). Required for efficient localization of SYNE4 in the nuclear envelope. May be involved in nuclear remodeling during sperm head formation in spermatogenesis. May play a role in DNA repair by suppressing non-homologous end joining repair to facilitate the repair of DNA cross-links. The polypeptide is SUN domain-containing protein 1 (Homo sapiens (Human)).